Here is a 295-residue protein sequence, read N- to C-terminus: Pyridoxal 5'-phosphate synthase subunit PdxS (295 aa).

D25 provides a ligand contact to D-ribose 5-phosphate. K82 acts as the Schiff-base intermediate with D-ribose 5-phosphate in catalysis. G154 is a binding site for D-ribose 5-phosphate. R166 serves as a coordination point for D-glyceraldehyde 3-phosphate. D-ribose 5-phosphate is bound by residues G215 and 236 to 237 (GS).

This sequence belongs to the PdxS/SNZ family. As to quaternary structure, in the presence of PdxT, forms a dodecamer of heterodimers.

The catalysed reaction is aldehydo-D-ribose 5-phosphate + D-glyceraldehyde 3-phosphate + L-glutamine = pyridoxal 5'-phosphate + L-glutamate + phosphate + 3 H2O + H(+). Its pathway is cofactor biosynthesis; pyridoxal 5'-phosphate biosynthesis. Functionally, catalyzes the formation of pyridoxal 5'-phosphate from ribose 5-phosphate (RBP), glyceraldehyde 3-phosphate (G3P) and ammonia. The ammonia is provided by the PdxT subunit. Can also use ribulose 5-phosphate and dihydroxyacetone phosphate as substrates, resulting from enzyme-catalyzed isomerization of RBP and G3P, respectively. In Actinobacillus pleuropneumoniae serotype 5b (strain L20), this protein is Pyridoxal 5'-phosphate synthase subunit PdxS.